The chain runs to 149 residues: Ribosome maturation factor RimP (149 aa).

The protein belongs to the RimP family.

It localises to the cytoplasm. In terms of biological role, required for maturation of 30S ribosomal subunits. This chain is Ribosome maturation factor RimP, found in Neisseria gonorrhoeae (strain NCCP11945).